The following is a 104-amino-acid chain: Replication restart protein PriB (104 aa).

An SSB domain is found at 1-101 (MTNRLALSGT…LHAEQIELID (101 aa)).

It belongs to the PriB family. Homodimer. Interacts with PriA and DnaT. Component of the replication restart primosome. Primosome assembly occurs via a 'hand-off' mechanism. PriA binds to replication forks, subsequently PriB then DnaT bind; DnaT then displaces ssDNA to generate the helicase loading substrate.

In terms of biological role, involved in the restart of stalled replication forks, which reloads the replicative helicase on sites other than the origin of replication; the PriA-PriB pathway is the major replication restart pathway. During primosome assembly it facilitates complex formation between PriA and DnaT on DNA; stabilizes PriA on DNA. Stimulates the DNA unwinding activity of PriA helicase. The sequence is that of Replication restart protein PriB from Citrobacter koseri (strain ATCC BAA-895 / CDC 4225-83 / SGSC4696).